The sequence spans 129 residues: Ribosome-binding factor A (129 aa).

The protein belongs to the RbfA family. As to quaternary structure, monomer. Binds 30S ribosomal subunits, but not 50S ribosomal subunits or 70S ribosomes.

It localises to the cytoplasm. One of several proteins that assist in the late maturation steps of the functional core of the 30S ribosomal subunit. Associates with free 30S ribosomal subunits (but not with 30S subunits that are part of 70S ribosomes or polysomes). Required for efficient processing of 16S rRNA. May interact with the 5'-terminal helix region of 16S rRNA. This Gloeobacter violaceus (strain ATCC 29082 / PCC 7421) protein is Ribosome-binding factor A.